Reading from the N-terminus, the 608-residue chain is Cytoplasmic dynein 1 intermediate chain 1 (608 aa).

Basic and acidic residues-rich tracts occupy residues 1–13 (MSDK…ELER) and 20–60 (QIRE…RETE). The disordered stretch occupies residues 1–106 (MSDKSDLKAE…SGDLGPLTRR (106 aa)). Residue Ser-2 is modified to N-acetylserine. Ser-50 is modified (phosphoserine). The segment covering 70–79 (PEPPLVPTPM) has biased composition (pro residues). The segment covering 80-90 (SPSSKSVSTPS) has biased composition (low complexity). Ser-83 carries the phosphoserine modification. Thr-88 bears the Phosphothreonine mark. Ser-90, Ser-94, and Ser-97 each carry phosphoserine. The segment at 110-126 (KLGVSKITQVDFLPREV) is interaction with DYNLT1. The tract at residues 132–184 (ETQTPLATHQSEEDEDDEEMVEPKGDQDSEQENEDKKQEVKEAPPRELTEEEK) is disordered. The residue at position 139 (Thr-139) is a Phosphothreonine. Ser-142 and Ser-160 each carry phosphoserine. Residues 165-184 (EDKKQEVKEAPPRELTEEEK) are compositionally biased toward basic and acidic residues. WD repeat units follow at residues 248 to 297 (SKHR…TTPE), 301 to 341 (HCQS…RTPV), 350 to 391 (AHTH…TPQE), 400 to 440 (SKPV…AGIG), 445 to 490 (GHQG…PLYS), 493 to 533 (DNAD…EVPT), and 539 to 578 (EGAS…VPHN). Ser-598 is modified (phosphoserine).

It belongs to the dynein intermediate chain family. In terms of assembly, homodimer. The cytoplasmic dynein 1 complex consists of two catalytic heavy chains (HCs) and a number of non-catalytic subunits presented by intermediate chains (ICs), light intermediate chains (LICs) and light chains (LCs); the composition seems to vary in respect to the IC, LIC and LC composition. The heavy chain homodimer serves as a scaffold for the probable homodimeric assembly of the respective non-catalytic subunits. The ICs and LICs bind directly to the HC dimer and the LCs assemble on the IC dimer. Interacts with DYNC1H1. Interacts with DYNLT1 and DYNLT3. Interacts with DCTN1. Interacts with MCRS1; the interaction is required for the proper distribution of centriolar satellites.

The protein resides in the cytoplasm. It is found in the chromosome. It localises to the centromere. Its subcellular location is the kinetochore. The protein localises to the cytoskeleton. The protein resides in the spindle pole. Its function is as follows. Acts as one of several non-catalytic accessory components of the cytoplasmic dynein 1 complex that are thought to be involved in linking dynein to cargos and to adapter proteins that regulate dynein function. Cytoplasmic dynein 1 acts as a motor for the intracellular retrograde motility of vesicles and organelles along microtubules. The intermediate chains mediate the binding of dynein to dynactin via its 150 kDa component (p150-glued) DCTN1. May play a role in mediating the interaction of cytoplasmic dynein with membranous organelles and kinetochores. This chain is Cytoplasmic dynein 1 intermediate chain 1 (DYNC1I1), found in Bos taurus (Bovine).